The primary structure comprises 404 residues: Succinyl-diaminopimelate desuccinylase (404 aa).

Residue His80 participates in Zn(2+) binding. Residue Asp82 is part of the active site. Asp113 contributes to the Zn(2+) binding site. The active-site Proton acceptor is the Glu147. Positions 148, 176, and 373 each coordinate Zn(2+).

This sequence belongs to the peptidase M20A family. DapE subfamily. Homodimer. Requires Zn(2+) as cofactor. The cofactor is Co(2+).

The enzyme catalyses N-succinyl-(2S,6S)-2,6-diaminopimelate + H2O = (2S,6S)-2,6-diaminopimelate + succinate. Its pathway is amino-acid biosynthesis; L-lysine biosynthesis via DAP pathway; LL-2,6-diaminopimelate from (S)-tetrahydrodipicolinate (succinylase route): step 3/3. Catalyzes the hydrolysis of N-succinyl-L,L-diaminopimelic acid (SDAP), forming succinate and LL-2,6-diaminopimelate (DAP), an intermediate involved in the bacterial biosynthesis of lysine and meso-diaminopimelic acid, an essential component of bacterial cell walls. This Allorhizobium ampelinum (strain ATCC BAA-846 / DSM 112012 / S4) (Agrobacterium vitis (strain S4)) protein is Succinyl-diaminopimelate desuccinylase.